We begin with the raw amino-acid sequence, 134 residues long: Lymphocyte antigen 6A-2/6E-1 (134 aa).

The first 26 residues, 1 to 26 (MDTSHTTKSCLLILLVALLCAERAQG), serve as a signal peptide directing secretion. The UPAR/Ly6 domain occupies 27-119 (LECYQCYGVP…NGGSTWTMAG (93 aa)). Disulfide bonds link Cys-29–Cys-53, Cys-32–Cys-41, Cys-46–Cys-74, Cys-78–Cys-98, and Cys-99–Cys-104. Residue Gly-112 is the site of GPI-anchor amidated glycine attachment. The propeptide at 113 to 134 (STWTMAGVLLFSLSSVLLQTLL) is removed in mature form.

O-glycosylated. Not N-glycosylated. In terms of processing, not phosphorylated. Widely expressed.

It localises to the cell membrane. Its function is as follows. T-cell activation. This chain is Lymphocyte antigen 6A-2/6E-1 (Ly6a), found in Mus musculus (Mouse).